The following is a 473-amino-acid chain: Glutamate--tRNA ligase (473 aa).

The 'HIGH' region signature appears at 9–19 (PSPTGYLHVGG). Zn(2+) is bound by residues C98, C100, C125, and D127. The 'KMSKS' region motif lies at 237–241 (KLSKR). K240 contacts ATP.

It belongs to the class-I aminoacyl-tRNA synthetase family. Glutamate--tRNA ligase type 1 subfamily. As to quaternary structure, monomer. Zn(2+) is required as a cofactor.

It is found in the cytoplasm. The enzyme catalyses tRNA(Glu) + L-glutamate + ATP = L-glutamyl-tRNA(Glu) + AMP + diphosphate. Catalyzes the attachment of glutamate to tRNA(Glu) in a two-step reaction: glutamate is first activated by ATP to form Glu-AMP and then transferred to the acceptor end of tRNA(Glu). The chain is Glutamate--tRNA ligase from Sodalis glossinidius (strain morsitans).